The primary structure comprises 494 residues: Guanosine-5'-triphosphate,3'-diphosphate pyrophosphatase (494 aa).

This sequence belongs to the GppA/Ppx family. GppA subfamily.

The enzyme catalyses guanosine 3'-diphosphate 5'-triphosphate + H2O = guanosine 3',5'-bis(diphosphate) + phosphate + H(+). Its pathway is purine metabolism; ppGpp biosynthesis; ppGpp from GTP: step 2/2. Functionally, catalyzes the conversion of pppGpp to ppGpp. Guanosine pentaphosphate (pppGpp) is a cytoplasmic signaling molecule which together with ppGpp controls the 'stringent response', an adaptive process that allows bacteria to respond to amino acid starvation, resulting in the coordinated regulation of numerous cellular activities. The sequence is that of Guanosine-5'-triphosphate,3'-diphosphate pyrophosphatase from Escherichia coli O157:H7.